The following is a 679-amino-acid chain: Methionine--tRNA ligase (679 aa).

A 'HIGH' region motif is present at residues 14–24 (PYANGSIHLGH). Residues C145, C148, C158, and C161 each coordinate Zn(2+). A 'KMSKS' region motif is present at residues 331–335 (KMSKS). K334 is an ATP binding site. Residues 577 to 679 (TFAAVDLRVA…SGAKPGQRIK (103 aa)) enclose the tRNA-binding domain.

The protein belongs to the class-I aminoacyl-tRNA synthetase family. MetG type 1 subfamily. As to quaternary structure, homodimer. The cofactor is Zn(2+).

It localises to the cytoplasm. The catalysed reaction is tRNA(Met) + L-methionine + ATP = L-methionyl-tRNA(Met) + AMP + diphosphate. In terms of biological role, is required not only for elongation of protein synthesis but also for the initiation of all mRNA translation through initiator tRNA(fMet) aminoacylation. The protein is Methionine--tRNA ligase of Pseudomonas putida (strain ATCC 700007 / DSM 6899 / JCM 31910 / BCRC 17059 / LMG 24140 / F1).